The primary structure comprises 109 residues: Spermidine export protein MdtI (109 aa).

Helical transmembrane passes span 6-26 (FYHI…NILL), 35-55 (VWLG…LAQA), 64-84 (AYAL…WILF), and 88-108 (LNYK…MIKL).

The protein belongs to the drug/metabolite transporter (DMT) superfamily. Small multidrug resistance (SMR) (TC 2.A.7.1) family. MdtI subfamily. As to quaternary structure, forms a complex with MdtJ.

The protein localises to the cell inner membrane. Catalyzes the excretion of spermidine. The polypeptide is Spermidine export protein MdtI (Yersinia enterocolitica serotype O:8 / biotype 1B (strain NCTC 13174 / 8081)).